A 121-amino-acid polypeptide reads, in one-letter code: uncharacterized protein (121 aa).

The protein resides in the mitochondrion. This is an uncharacterized protein from Arabidopsis thaliana (Mouse-ear cress).